The chain runs to 178 residues: Ribosome maturation factor RimM (178 aa).

Positions 104–177 (SDEYYFYEVI…KIVVKLPEWL (74 aa)) constitute a PRC barrel domain.

It belongs to the RimM family. As to quaternary structure, binds ribosomal protein uS19.

It localises to the cytoplasm. Its function is as follows. An accessory protein needed during the final step in the assembly of 30S ribosomal subunit, possibly for assembly of the head region. Essential for efficient processing of 16S rRNA. May be needed both before and after RbfA during the maturation of 16S rRNA. It has affinity for free ribosomal 30S subunits but not for 70S ribosomes. The sequence is that of Ribosome maturation factor RimM from Thermosipho melanesiensis (strain DSM 12029 / CIP 104789 / BI429).